The chain runs to 2495 residues: Zinc finger protein 462 (2495 aa).

3 C2H2-type zinc fingers span residues 4-27, 108-131, and 162-185; these read LQCDGCDFRAPSYEDLKAHIQDVH, FQCKFCVRYFRSKNLLIEHTRKVH, and FSCQFCTYKSPRRARIIKHQKMYH. Lys-20 participates in a covalent cross-link: Glycyl lysine isopeptide (Lys-Gly) (interchain with G-Cter in SUMO1); alternate. Residue Lys-20 forms a Glycyl lysine isopeptide (Lys-Gly) (interchain with G-Cter in SUMO2); alternate linkage. The interaction with PBX1 stretch occupies residues 215-241; it reads PCKELPAEVVERSILESMVKPLTKSRG. Glycyl lysine isopeptide (Lys-Gly) (interchain with G-Cter in SUMO2) cross-links involve residues Lys-234 and Lys-271. 3 disordered regions span residues 278–301, 329–357, and 370–395; these read QQEGPNVSEAQNDNEPSPTSNSTY, RPNSSSTSKFSSSMSYPQMKPKSPHNSGL, and DMTNSSADLDTNSMLNDSSSDEDLNE. Over residues 332–343 the composition is skewed to low complexity; that stretch reads SSSTSKFSSSMS. Glycyl lysine isopeptide (Lys-Gly) (interchain with G-Cter in SUMO2) cross-links involve residues Lys-337, Lys-348, and Lys-350. Residues Ser-351 and Ser-355 each carry the phosphoserine modification. Positions 370-387 are enriched in polar residues; that stretch reads DMTNSSADLDTNSMLNDS. Residue Lys-429 forms a Glycyl lysine isopeptide (Lys-Gly) (interchain with G-Cter in SUMO2) linkage. 2 C2H2-type zinc fingers span residues 440–463 and 471–493; these read FQCPFCPFLTMHRRSISRHIENIH and YKCDECPFTCKSSLKLGAHKQCH. Lys-485 participates in a covalent cross-link: Glycyl lysine isopeptide (Lys-Gly) (interchain with G-Cter in SUMO2). The segment at 492–590 is disordered; that stretch reads CHTGTSDWDT…PQPPTQAPPL (99 aa). A compositionally biased stretch (polar residues) spans 493–502; sequence HTGTSDWDTV. Residues 503 to 515 show a composition bias toward low complexity; that stretch reads NSQSESLSSSLNE. Residues 542–590 are compositionally biased toward pro residues; the sequence is PPQPPPPLPPPPPPPSQPLPQPPPPPLQSPHQVPPPTQQPQPPTQAPPL. Residues 593–616 form a C2H2-type 6 zinc finger; that stretch reads YKCTMCSYSTMTLKGLRVHQQHKH. Residues Lys-624, Lys-650, and Lys-661 each participate in a glycyl lysine isopeptide (Lys-Gly) (interchain with G-Cter in SUMO2) cross-link. Residues 629-654 are disordered; sequence PSSLPLENETDSHPSSSNTVKKSQTS. The segment covering 641–654 has biased composition (polar residues); that stretch reads HPSSSNTVKKSQTS. The residue at position 681 (Ser-681) is a Phosphoserine. A Glycyl lysine isopeptide (Lys-Gly) (interchain with G-Cter in SUMO2) cross-link involves residue Lys-699. 3 C2H2-type zinc fingers span residues 835 to 858, 878 to 900, and 917 to 940; these read YYCKHCDFNNKSARSVSTHYQRMH, YRCLECYIDYTNFEDLQQHYGEH, and YRCRFCSYTSPNVRSLMPHYQRMH. A Glycyl lysine isopeptide (Lys-Gly) (interchain with G-Cter in SUMO2) cross-link involves residue Lys-978. The tract at residues 980–999 is disordered; it reads MATSTPVARGGGLPATFNKN. The C2H2-type 10 zinc finger occupies 1023–1046; that stretch reads YDCDVCSFASPNMHSVLVHYQKKH. Ser-1083 carries the phosphoserine modification. Lys-1128 is covalently cross-linked (Glycyl lysine isopeptide (Lys-Gly) (interchain with G-Cter in SUMO2)). Ser-1159 is subject to Phosphoserine. Glycyl lysine isopeptide (Lys-Gly) (interchain with G-Cter in SUMO2) cross-links involve residues Lys-1196, Lys-1204, Lys-1210, and Lys-1232. C2H2-type zinc fingers lie at residues 1254-1277 and 1459-1482; these read LKCRQCSYTSPYFYALRKHIKKDH and YQCTVCQSEYNNLHGLLTHYGKKH. Lys-1488 is covalently cross-linked (Glycyl lysine isopeptide (Lys-Gly) (interchain with G-Cter in SUMO2)). The C2H2-type 13 zinc-finger motif lies at 1504–1527; sequence YKCRHCPYINTRIHGVLTHYQKRH. Glycyl lysine isopeptide (Lys-Gly) (interchain with G-Cter in SUMO2) cross-links involve residues Lys-1560 and Lys-1580. 3 consecutive C2H2-type zinc fingers follow at residues 1566-1589, 1649-1672, and 1686-1709; these read YRCKLCPYTHGTLEKLKIHYEKYH, FRCQLCKYFCSTRKGIARHYRIKH, and FKCALCAYTNPIRKGLAAHYQKRH. Glycyl lysine isopeptide (Lys-Gly) (interchain with G-Cter in SUMO2) cross-links involve residues Lys-1687 and Lys-1769. A C2H2-type 17 zinc finger spans residues 1881–1903; sequence FQCKHCDSKLQSIAELTSHLNIH. Lys-1935 participates in a covalent cross-link: Glycyl lysine isopeptide (Lys-Gly) (interchain with G-Cter in SUMO2). Residues 1957–1981 form a C2H2-type 18; degenerate zinc finger; that stretch reads YKCKFCVEVHPTLRAICNHLRKHVQ. An N6-methyllysine modification is found at Lys-1993. 3 consecutive C2H2-type zinc fingers follow at residues 2014-2037, 2043-2066, and 2072-2095; these read YSCQYCSFVSAFRHNLDRHMQTHH, FRCKLCSFKSSYNSRLKTHILKAH, and YKCSWCSFSTMTISQLKEHSLKVH. Residue Lys-2093 forms a Glycyl lysine isopeptide (Lys-Gly) (interchain with G-Cter in SUMO2) linkage. Composition is skewed to polar residues over residues 2112–2121 and 2132–2149; these read SHAHPSSQKA and DSSYSEPPDVQQQLNHYQ. The segment at 2112–2172 is disordered; sequence SHAHPSSQKA…VPPSGTAAGT (61 aa). 2 positions are modified to phosphoserine: Ser-2161 and Ser-2166. 3 consecutive C2H2-type zinc fingers follow at residues 2180-2203, 2209-2232, and 2243-2265; these read LHCEFCEFSSGYIQSIRRHYRDKH, FKCKDCSFYTGFKSAFTMHVEAGH, and LRCPLCLYHTKYKRNMIDHIVLH. Lys-2282 participates in a covalent cross-link: Glycyl lysine isopeptide (Lys-Gly) (interchain with G-Cter in SUMO2). 2 consecutive C2H2-type zinc fingers follow at residues 2289–2311 and 2317–2340; these read FRCDKCTFTCSSDESLQQHIEKH and YKCQLCYYETKHTEELDTHLRDEH. A disordered region spans residues 2361-2387; sequence KEKIESSSSEDEDKDDEMSSKAEDREL. The span at 2377–2387 shows a compositional bias: basic and acidic residues; it reads EMSSKAEDREL. A C2H2-type 27 zinc finger spans residues 2403 to 2425; sequence FPCEFCGRAFSQGSEWERHVLRH. Lys-2493 participates in a covalent cross-link: Glycyl lysine isopeptide (Lys-Gly) (interchain with G-Cter in SUMO2).

As to quaternary structure, interacts with PBX1 isoform PBX1b; this interaction prevents PBX1-HOXA9 heterodimer from forming and binding to DNA. As to expression, expressed in the cerebral cortex (at protein level). Expressed in embryonic stem cells (at protein level). Expressed in heart, liver, kidney, muscle, and female and male genital tracts (at protein level).

It localises to the nucleus. Zinc finger nuclear factor involved in transcription by regulating chromatin structure and organization. Involved in the pluripotency and differentiation of embryonic stem cells by regulating SOX2, POU5F1/OCT4, and NANOG. By binding PBX1, prevents the heterodimerization of PBX1 and HOXA9 and their binding to DNA. Regulates neuronal development and neural cell differentiation. In Mus musculus (Mouse), this protein is Zinc finger protein 462.